A 173-amino-acid polypeptide reads, in one-letter code: Beta-defensin 129 (173 aa).

Residues 1-19 form the signal peptide; the sequence is MKLLFPIFASLMLQYKVNT. Disulfide bonds link C27–C53, C34–C48, and C38–C54. The segment at 144 to 173 is disordered; sequence STKSNIKESRDSATASPPPAPPPPNTLPTP. The segment covering 159–173 has biased composition (pro residues); it reads SPPPAPPPPNTLPTP.

Belongs to the beta-defensin family.

It is found in the secreted. Functionally, has antibacterial activity. This Hylobates lar (Lar gibbon) protein is Beta-defensin 129 (DEFB129).